Consider the following 426-residue polypeptide: Trophoblast glycoprotein (426 aa).

The signal sequence occupies residues 1-31 (MPGAGSRGPSAGDGRLRLARLALVLLGWVSA). Over 32–361 (SAPSSSLPSS…ATLPQSLQTS (330 aa)) the chain is Extracellular. Low complexity predominate over residues 34 to 51 (PSSSLPSSSTSPAAFLAS). A disordered region spans residues 34 to 54 (PSSSLPSSSTSPAAFLASGSA). The LRRNT domain maps to 53–91 (SAQPPPAERCPAACECSEAARTVKCVNRNLLEVPADLPP). 2 cysteine pairs are disulfide-bonded: C62-C68 and C66-C77. 3 LRR repeats span residues 92–113 (YVRN…AFAR), 116–139 (PLAD…GAFE), and 141–163 (LPGL…FTFA). Residue N124 is glycosylated (N-linked (GlcNAc...) asparagine). N-linked (GlcNAc...) asparagine glycosylation is present at N166. LRR repeat units follow at residues 172 to 210 (PSPL…AALR), 215 to 238 (LRGL…LLDQ), 239 to 261 (LPSL…ASFR), and 262 to 281 (NLTH…VLHN). N-linked (GlcNAc...) asparagine glycosylation occurs at N281. In terms of domain architecture, LRRCT spans 289–352 (GLAHVRVFLD…LTSSDLDCDA (64 aa)). 2 cysteine pairs are disulfide-bonded: C304-C329 and C306-C350. A helical transmembrane segment spans residues 362-382 (YVFLGIVLALIGAIFLLVLYL). Residues 383–426 (NRKGIKKWMHNIRDACRDHMEGYHYRYEINADPRLTNLSSNSDV) are Cytoplasmic-facing. At S424 the chain carries Phosphoserine.

In terms of processing, highly glycosylated.

Its subcellular location is the cell membrane. In terms of biological role, may function as an inhibitor of Wnt/beta-catenin signaling by indirectly interacting with LRP6 and blocking Wnt3a-dependent LRP6 internalization. The chain is Trophoblast glycoprotein (Tpbg) from Rattus norvegicus (Rat).